The sequence spans 1133 residues: DNA repair protein rad8 (1133 aa).

2 disordered regions span residues methionine 1 to asparagine 34 and proline 392 to valine 413. Serine 18 is subject to Phosphoserine. A Helicase ATP-binding domain is found at proline 516–glutamate 705. Aspartate 529–threonine 536 contacts ATP. The DEGH box motif lies at aspartate 656 to histidine 659. Residues cysteine 877–arginine 923 form an RING-type zinc finger. Residues glutamine 971–glutamate 1125 form the Helicase C-terminal domain.

Belongs to the SNF2/RAD54 helicase family.

The protein resides in the cytoplasm. Its subcellular location is the nucleus. Functionally, probable helicase, member of the UBC2/RAD6 epistasis group. Functions with DNA repair protein rad18 in error-free postreplication DNA repair. Involved in the maintenance of wild-type rates of instability of simple repetitive sequences such as poly(GT) repeats. Plays a role in surviving topoisomerase-mediated DNA damage. This is DNA repair protein rad8 from Schizosaccharomyces pombe (strain 972 / ATCC 24843) (Fission yeast).